The primary structure comprises 142 residues: Large ribosomal subunit protein uL11 (142 aa).

Belongs to the universal ribosomal protein uL11 family. Part of the ribosomal stalk of the 50S ribosomal subunit. Interacts with L10 and the large rRNA to form the base of the stalk. L10 forms an elongated spine to which L12 dimers bind in a sequential fashion forming a multimeric L10(L12)X complex. In terms of processing, one or more lysine residues are methylated.

Functionally, forms part of the ribosomal stalk which helps the ribosome interact with GTP-bound translation factors. In Mannheimia succiniciproducens (strain KCTC 0769BP / MBEL55E), this protein is Large ribosomal subunit protein uL11.